Reading from the N-terminus, the 449-residue chain is Glycoprotein endo-alpha-1,2-mannosidase (449 aa).

Residues 1 to 8 (MIRFRRRT) lie on the Cytoplasmic side of the membrane. A helical; Signal-anchor for type II membrane protein transmembrane segment spans residues 9 to 29 (CITLSIFIFLVCLIMAGLKHL). The Lumenal portion of the chain corresponds to 30 to 449 (RPENAAFGSP…YMKEKEHWLV (420 aa)). The interval 59 to 449 (DSENHLKGNT…YMKEKEHWLV (391 aa)) is catalytic.

The protein belongs to the glycosyl hydrolase 99 family.

Its subcellular location is the golgi apparatus membrane. The enzyme catalyses N-{alpha-Glc-(1-&gt;3)-alpha-Man-(1-&gt;2)-alpha-Man-(1-&gt;2)-alpha-Man-(1-&gt;3)-[alpha-Man-(1-&gt;2)-alpha-Man-(1-&gt;3)-[alpha-Man-(1-&gt;2)-alpha-Man-(1-&gt;6)]-alpha-Man-(1-&gt;6)]-beta-Man-(1-&gt;4)-beta-GlcNAc-(1-&gt;4)-beta-GlcNAc}-L-asparaginyl-[protein] + H2O = alpha-D-glucosyl-(1-&gt;3)-D-mannopyranose + N(4)-{alpha-D-Man-(1-&gt;2)-alpha-D-Man-(1-&gt;3)-[alpha-D-Man-(1-&gt;2)-alpha-D-Man-(1-&gt;3)-[alpha-D-Man-(1-&gt;2)-alpha-D-Man-(1-&gt;6)]-alpha-D-Man-(1-&gt;6)]-beta-D-Man-(1-&gt;4)-beta-D-GlaNAc-(1-&gt;4)-beta-D-GlcNAc}-L-asparaginyl-[protein] (N-glucan mannose isomer 8A1,2,3B1,2). In Xenopus laevis (African clawed frog), this protein is Glycoprotein endo-alpha-1,2-mannosidase (manea).